The sequence spans 154 residues: Large ribosomal subunit protein uL13 (154 aa).

It belongs to the universal ribosomal protein uL13 family. Part of the 50S ribosomal subunit.

Functionally, this protein is one of the early assembly proteins of the 50S ribosomal subunit, although it is not seen to bind rRNA by itself. It is important during the early stages of 50S assembly. In Rhizobium leguminosarum bv. trifolii (strain WSM2304), this protein is Large ribosomal subunit protein uL13.